The sequence spans 517 residues: Putative ribose/galactose/methyl galactoside import ATP-binding protein 1 (517 aa).

ABC transporter domains lie at 23 to 258 and 269 to 515; these read LQLQ…VGRP and TPTD…SGRS. Position 55 to 62 (55 to 62) interacts with ATP; that stretch reads GENGAGKS.

This sequence belongs to the ABC transporter superfamily. Carbohydrate importer 2 (CUT2) (TC 3.A.1.2) family.

Its subcellular location is the cell inner membrane. It carries out the reaction D-ribose(out) + ATP + H2O = D-ribose(in) + ADP + phosphate + H(+). It catalyses the reaction D-galactose(out) + ATP + H2O = D-galactose(in) + ADP + phosphate + H(+). Part of an ABC transporter complex involved in carbohydrate import. Could be involved in ribose, galactose and/or methyl galactoside import. Responsible for energy coupling to the transport system. This chain is Putative ribose/galactose/methyl galactoside import ATP-binding protein 1, found in Burkholderia ambifaria (strain ATCC BAA-244 / DSM 16087 / CCUG 44356 / LMG 19182 / AMMD) (Burkholderia cepacia (strain AMMD)).